Consider the following 245-residue polypeptide: DNA repair protein RecO (245 aa).

It belongs to the RecO family.

Its function is as follows. Involved in DNA repair and RecF pathway recombination. This Klebsiella pneumoniae subsp. pneumoniae (strain ATCC 700721 / MGH 78578) protein is DNA repair protein RecO.